The following is a 413-amino-acid chain: MNIYAVGGAIRDELLGVPVQDRDYVVVGATPEQMTAQGFRPVGKDFPVFLHPQTQEEYALARTERKTAAGYHGFQFHYAPDVTLDEDLARRDLTINAMAREVSPEGALVGPVIDPFDGQADLRARVFRHVSDAFVEDPVRILRIARFAARFADFTVADETLALMRRMVDAGEIDALVPERVWQEIARGLMEAKPSRMFAVLRDCGALARIVPEVDALWGVPQRADYHPEVDTGVHVMMVVDYAAKQGYSLAVRFAALTHDLGKGTTPADVLPRHVGHESRSVELLKPLCERLRVPNESRDLALVVAREHGNLHRVMEMGAAALVRLFERSDALRKPARFAELLQACESDARGRLGLDAQPYPQAERLRVALAAARSVDAGAIARGIGNDTEKIKEAVHRARVQAVAQALAIGE.

Glycine 8 and arginine 11 together coordinate ATP. CTP-binding residues include glycine 8 and arginine 11. Mg(2+) contacts are provided by aspartate 21 and aspartate 23. Residues arginine 91, arginine 143, and arginine 146 each coordinate ATP. Residues arginine 91, arginine 143, and arginine 146 each contribute to the CTP site. An HD domain is found at 232 to 333; sequence TGVHVMMVVD…VRLFERSDAL (102 aa).

The protein belongs to the tRNA nucleotidyltransferase/poly(A) polymerase family. Bacterial CCA-adding enzyme type 1 subfamily. As to quaternary structure, monomer. Can also form homodimers and oligomers. Mg(2+) is required as a cofactor. Requires Ni(2+) as cofactor.

The catalysed reaction is a tRNA precursor + 2 CTP + ATP = a tRNA with a 3' CCA end + 3 diphosphate. It carries out the reaction a tRNA with a 3' CCA end + 2 CTP + ATP = a tRNA with a 3' CCACCA end + 3 diphosphate. Functionally, catalyzes the addition and repair of the essential 3'-terminal CCA sequence in tRNAs without using a nucleic acid template. Adds these three nucleotides in the order of C, C, and A to the tRNA nucleotide-73, using CTP and ATP as substrates and producing inorganic pyrophosphate. tRNA 3'-terminal CCA addition is required both for tRNA processing and repair. Also involved in tRNA surveillance by mediating tandem CCA addition to generate a CCACCA at the 3' terminus of unstable tRNAs. While stable tRNAs receive only 3'-terminal CCA, unstable tRNAs are marked with CCACCA and rapidly degraded. The sequence is that of Multifunctional CCA protein from Burkholderia orbicola (strain MC0-3).